The sequence spans 635 residues: Threonine--tRNA ligase (635 aa).

Positions 1–152 (MQLLLIHSDY…AKAAVKPEAA (152 aa)) are editing domain. A catalytic region spans residues 215-514 (PHVELMRRLE…TEEGKVPMLP (300 aa)). 3 residues coordinate Zn(2+): Cys-307, His-359, and His-483.

The protein belongs to the class-II aminoacyl-tRNA synthetase family. In terms of assembly, homodimer. It depends on Zn(2+) as a cofactor.

The protein localises to the cytoplasm. It catalyses the reaction tRNA(Thr) + L-threonine + ATP = L-threonyl-tRNA(Thr) + AMP + diphosphate + H(+). Its function is as follows. Catalyzes the attachment of threonine to tRNA(Thr) in a two-step reaction: L-threonine is first activated by ATP to form Thr-AMP and then transferred to the acceptor end of tRNA(Thr). Also edits incorrectly charged L-seryl-tRNA(Thr). This chain is Threonine--tRNA ligase, found in Methanosarcina acetivorans (strain ATCC 35395 / DSM 2834 / JCM 12185 / C2A).